A 299-amino-acid chain; its full sequence is Small ribosomal subunit protein uS2 (299 aa).

The span at 259–291 shows a compositional bias: low complexity; that stretch reads AAASAAGPTSWEADGADWAASSAPAAAGESWAE. A disordered region spans residues 259–299; the sequence is AAASAAGPTSWEADGADWAASSAPAAAGESWAETQPAEGKW.

It belongs to the universal ribosomal protein uS2 family. As to quaternary structure, component of the small ribosomal subunit. Mature ribosomes consist of a small (40S) and a large (60S) subunit. The 40S subunit contains about 33 different proteins and 1 molecule of RNA (18S). The 60S subunit contains about 49 different proteins and 3 molecules of RNA (25S, 5.8S and 5S). Interacts with rps21.

It is found in the cytoplasm. Required for the assembly and/or stability of the 40S ribosomal subunit. Required for the processing of the 20S rRNA-precursor to mature 18S rRNA in a late step of the maturation of 40S ribosomal subunits. In Aspergillus flavus (strain ATCC 200026 / FGSC A1120 / IAM 13836 / NRRL 3357 / JCM 12722 / SRRC 167), this protein is Small ribosomal subunit protein uS2 (rps0).